The following is a 736-amino-acid chain: Catalase-peroxidase (736 aa).

Residues 100 to 223 (WHSAGTYRIG…LAAVQMGLIY (124 aa)) constitute a cross-link (tryptophyl-tyrosyl-methioninium (Trp-Tyr) (with M-249)). His101 serves as the catalytic Proton acceptor. Residues 223–249 (YVNPEGPDGKPDPVAAARDIRETFRRM) constitute a cross-link (tryptophyl-tyrosyl-methioninium (Tyr-Met) (with W-100)). His264 contributes to the heme b binding site.

Belongs to the peroxidase family. Peroxidase/catalase subfamily. As to quaternary structure, homodimer or homotetramer. Requires heme b as cofactor. Formation of the three residue Trp-Tyr-Met cross-link is important for the catalase, but not the peroxidase activity of the enzyme.

It carries out the reaction H2O2 + AH2 = A + 2 H2O. The catalysed reaction is 2 H2O2 = O2 + 2 H2O. In terms of biological role, bifunctional enzyme with both catalase and broad-spectrum peroxidase activity. The sequence is that of Catalase-peroxidase from Geobacillus kaustophilus (strain HTA426).